Here is a 366-residue protein sequence, read N- to C-terminus: Aminomethyltransferase (366 aa).

This sequence belongs to the GcvT family. As to quaternary structure, the glycine cleavage system is composed of four proteins: P, T, L and H.

It catalyses the reaction N(6)-[(R)-S(8)-aminomethyldihydrolipoyl]-L-lysyl-[protein] + (6S)-5,6,7,8-tetrahydrofolate = N(6)-[(R)-dihydrolipoyl]-L-lysyl-[protein] + (6R)-5,10-methylene-5,6,7,8-tetrahydrofolate + NH4(+). Its function is as follows. The glycine cleavage system catalyzes the degradation of glycine. In Bacillus cereus (strain B4264), this protein is Aminomethyltransferase.